Consider the following 70-residue polypeptide: Large ribosomal subunit protein eL43 (70 aa).

4 residues coordinate Zn(2+): Cys-36, Cys-39, Cys-55, and Cys-58. The segment at 36–58 (CPYCKTTGKVIRLASGIWYCKKC) adopts a C4-type zinc-finger fold.

The protein belongs to the eukaryotic ribosomal protein eL43 family. Putative zinc-binding subfamily. In terms of assembly, part of the 50S ribosomal subunit. Requires Zn(2+) as cofactor.

Its function is as follows. Binds to the 23S rRNA. The chain is Large ribosomal subunit protein eL43 from Saccharolobus solfataricus (strain ATCC 35092 / DSM 1617 / JCM 11322 / P2) (Sulfolobus solfataricus).